Reading from the N-terminus, the 312-residue chain is Serine/threonine-protein kinase ppk11 (312 aa).

The region spanning 6-258 (YRDLQLIGQG…AEYLSKHKFI (253 aa)) is the Protein kinase domain. ATP-binding positions include 12–20 (IGQGSFGSV) and Lys-35. The active-site Proton acceptor is the Asp-127.

It belongs to the protein kinase superfamily. Ser/Thr protein kinase family.

It localises to the cytoplasm. The protein resides in the nucleus. It catalyses the reaction L-seryl-[protein] + ATP = O-phospho-L-seryl-[protein] + ADP + H(+). The catalysed reaction is L-threonyl-[protein] + ATP = O-phospho-L-threonyl-[protein] + ADP + H(+). This is Serine/threonine-protein kinase ppk11 (ppk11) from Schizosaccharomyces pombe (strain 972 / ATCC 24843) (Fission yeast).